An 868-amino-acid chain; its full sequence is Translation initiation factor IF-2 (868 aa).

2 stretches are compositionally biased toward basic and acidic residues: residues 156–166 (ETVKEEEKINS) and 199–209 (SKKEEVKPEKV). 2 disordered regions span residues 156–177 (ETVK…QDEL) and 199–269 (SKKE…KYRE). Residues 249–260 (RGGRSKFKKKKG) show a composition bias toward basic residues. A tr-type G domain is found at 368–537 (GRAPVVTIMG…LLQSEVLELK (170 aa)). A G1 region spans residues 377–384 (GHVDHGKT). GTP is bound at residue 377–384 (GHVDHGKT). The tract at residues 402–406 (GITQH) is G2. The interval 423–426 (DTPG) is G3. Residues 423–427 (DTPGH) and 477–480 (NKMD) contribute to the GTP site. The interval 477-480 (NKMD) is G4. Residues 513–515 (SAK) form a G5 region.

Belongs to the TRAFAC class translation factor GTPase superfamily. Classic translation factor GTPase family. IF-2 subfamily.

Its subcellular location is the cytoplasm. Functionally, one of the essential components for the initiation of protein synthesis. Protects formylmethionyl-tRNA from spontaneous hydrolysis and promotes its binding to the 30S ribosomal subunits. Also involved in the hydrolysis of GTP during the formation of the 70S ribosomal complex. This is Translation initiation factor IF-2 from Legionella pneumophila subsp. pneumophila (strain Philadelphia 1 / ATCC 33152 / DSM 7513).